The following is a 1144-amino-acid chain: Type II inositol polyphosphate 5-phosphatase 14 (1144 aa).

Disordered regions lie at residues 15–67 (ASLV…FDSS) and 81–118 (GRTS…DDIE). 5 WD repeats span residues 158 to 196 (ETQT…EVGC), 216 to 255 (VPTS…TTTA), 269 to 307 (AHRG…KSLV), 445 to 483 (EDTR…LREV), and 524 to 561 (SHNE…PLDS). Catalytic stretches follow at residues 791–807 (DLVA…FGIT) and 870–885 (KKRI…YRDN). Residue Lys-949 forms a Glycyl lysine isopeptide (Lys-Gly) (interchain with G-Cter in ubiquitin) linkage. Polar residues predominate over residues 1111–1131 (TTMTKNLEGSTRYQTDANRGG). The tract at residues 1111 to 1144 (TTMTKNLEGSTRYQTDANRGGSTRHRTDDSTRRG) is disordered. Residues 1135 to 1144 (HRTDDSTRRG) show a composition bias toward basic and acidic residues.

It belongs to the inositol polyphosphate 5-phosphatase family. Requires Mg(2+) as cofactor. As to expression, expressed in young seedlings and flowers.

The enzyme catalyses a 1,2-diacyl-sn-glycero-3-phospho-(1D-myo-inositol-4,5-bisphosphate) + H2O = a 1,2-diacyl-sn-glycero-3-phospho-(1D-myo-inositol 4-phosphate) + phosphate. It carries out the reaction a 1,2-diacyl-sn-glycero-3-phospho-(1D-myo-inositol-3,4,5-trisphosphate) + H2O = a 1,2-diacyl-sn-glycero-3-phospho-(1D-myo-inositol-3,4-bisphosphate) + phosphate. It catalyses the reaction 1D-myo-inositol 1,4,5-trisphosphate + H2O = 1D-myo-inositol 1,4-bisphosphate + phosphate. Has phosphatase activity toward PtdIns(4,5)P2, PtdIns(3,4,5)P3 and Ins(1,4,5)P3. This chain is Type II inositol polyphosphate 5-phosphatase 14, found in Arabidopsis thaliana (Mouse-ear cress).